Reading from the N-terminus, the 463-residue chain is uncharacterized protein (463 aa).

Residues Val-9–Lys-67 form the TRAM domain. [4Fe-4S] cluster is bound by residues Cys-80, Cys-86, Cys-89, and Cys-169. The S-adenosyl-L-methionine site is built by Gln-293, Tyr-322, Asp-343, and Asp-391. The active-site Nucleophile is Cys-418.

It belongs to the class I-like SAM-binding methyltransferase superfamily. RNA M5U methyltransferase family.

This is an uncharacterized protein from Halalkalibacterium halodurans (strain ATCC BAA-125 / DSM 18197 / FERM 7344 / JCM 9153 / C-125) (Bacillus halodurans).